The sequence spans 63 residues: Large ribosomal subunit protein uL29 (63 aa).

It belongs to the universal ribosomal protein uL29 family.

In Actinobacillus succinogenes (strain ATCC 55618 / DSM 22257 / CCUG 43843 / 130Z), this protein is Large ribosomal subunit protein uL29.